The following is a 316-amino-acid chain: Ribosomal RNA large subunit methyltransferase F (316 aa).

Positions 200 to 222 are disordered; sequence EEANKSTSRKVSNLNPKEKKNTN. Polar residues predominate over residues 204–214; the sequence is KSTSRKVSNLN.

The protein belongs to the methyltransferase superfamily. METTL16/RlmF family.

Its subcellular location is the cytoplasm. It catalyses the reaction adenosine(1618) in 23S rRNA + S-adenosyl-L-methionine = N(6)-methyladenosine(1618) in 23S rRNA + S-adenosyl-L-homocysteine + H(+). In terms of biological role, specifically methylates the adenine in position 1618 of 23S rRNA. In Flavobacterium johnsoniae (strain ATCC 17061 / DSM 2064 / JCM 8514 / BCRC 14874 / CCUG 350202 / NBRC 14942 / NCIMB 11054 / UW101) (Cytophaga johnsonae), this protein is Ribosomal RNA large subunit methyltransferase F.